Reading from the N-terminus, the 285-residue chain is N-alpha-acetyltransferase 40 (285 aa).

Positions 88–274 constitute an N-acetyltransferase domain; sequence INYKLHKSRG…GGGRVVVPCD (187 aa). Residues Y116, 163-165, and Y185 contribute to the substrate site; that span reads TEE. Acetyl-CoA contacts are provided by residues 187 to 189 and 195 to 200; these read VHV and GHGIGR. T228 is a substrate binding site. N233 lines the acetyl-CoA pocket.

This sequence belongs to the acetyltransferase family. NAA40 subfamily.

The protein localises to the nucleus. It localises to the cytoplasm. It catalyses the reaction N-terminal L-seryl-[histone H4] + acetyl-CoA = N-terminal N(alpha)-acetyl-L-seryl-[histone H4] + CoA + H(+). The enzyme catalyses N-terminal L-seryl-[histone H2A] + acetyl-CoA = N-terminal N(alpha)-acetyl-L-seryl-[histone H2A] + CoA + H(+). In terms of biological role, N-alpha-acetyltransferase that specifically mediates the acetylation of the N-terminal residues of histones H4 and H2A. In Saccharomyces cerevisiae (strain ATCC 204508 / S288c) (Baker's yeast), this protein is N-alpha-acetyltransferase 40.